We begin with the raw amino-acid sequence, 408 residues long: ATP phosphoribosyltransferase regulatory subunit (408 aa).

The protein belongs to the class-II aminoacyl-tRNA synthetase family. HisZ subfamily. Heteromultimer composed of HisG and HisZ subunits.

It is found in the cytoplasm. It participates in amino-acid biosynthesis; L-histidine biosynthesis; L-histidine from 5-phospho-alpha-D-ribose 1-diphosphate: step 1/9. Functionally, required for the first step of histidine biosynthesis. May allow the feedback regulation of ATP phosphoribosyltransferase activity by histidine. The polypeptide is ATP phosphoribosyltransferase regulatory subunit (Thermosynechococcus vestitus (strain NIES-2133 / IAM M-273 / BP-1)).